Consider the following 438-residue polypeptide: Exodeoxyribonuclease 7 large subunit (438 aa).

Positions 405–438 are disordered; it reads GATSTGPTDDIPSSAARLPSSPAPDARPASGAES.

Belongs to the XseA family. In terms of assembly, heterooligomer composed of large and small subunits.

Its subcellular location is the cytoplasm. The enzyme catalyses Exonucleolytic cleavage in either 5'- to 3'- or 3'- to 5'-direction to yield nucleoside 5'-phosphates.. Its function is as follows. Bidirectionally degrades single-stranded DNA into large acid-insoluble oligonucleotides, which are then degraded further into small acid-soluble oligonucleotides. The chain is Exodeoxyribonuclease 7 large subunit from Clavibacter michiganensis subsp. michiganensis (strain NCPPB 382).